An 878-amino-acid chain; its full sequence is Bifunctional heparan sulfate N-deacetylase/N-sulfotransferase 1 (878 aa).

The Cytoplasmic segment spans residues 1-17; that stretch reads MSLSLKTRRFGRPVRPQ. Residues 1 to 169 are sufficient for localization to Golgi membrane; that stretch reads MSLSLKTRRF…VEYGVGIIGF (169 aa). Residues 18–38 form a helical; Signal-anchor for type II membrane protein membrane-spanning segment; it reads LVLLLLFALCLLSVFISAYYL. The Lumenal segment spans residues 39-878; sequence YGWKRGLEPS…WLREELQSTR (840 aa). The segment at 40–594 is heparan sulfate N-deacetylase 1; sequence GWKRGLEPSG…KRHKDIWSKE (555 aa). Residues 47-71 form a disordered region; that stretch reads PSGSEAQSPDCDEPKISPSRLLPMK. N-linked (GlcNAc...) asparagine glycosylation is found at Asn231, Asn347, and Asn397. The heparan sulfate N-sulfotransferase 1 stretch occupies residues 595 to 878; that stretch reads KTCDRFPKLL…WLREELQSTR (284 aa). The For sulfotransferase activity role is filled by Lys610. Residue 610–614 participates in adenosine 3',5'-bisphosphate binding; that stretch reads KTGTT. Asn663 carries an N-linked (GlcNAc...) asparagine glycan. Adenosine 3',5'-bisphosphate contacts are provided by Ser708 and Trp813. The cysteines at positions 814 and 824 are disulfide-linked. 829–833 lines the adenosine 3',5'-bisphosphate pocket; sequence KGRKY.

It belongs to the sulfotransferase 1 family. NDST subfamily. As to quaternary structure, monomer.

Its subcellular location is the golgi apparatus membrane. The protein localises to the golgi apparatus. It localises to the trans-Golgi network membrane. It carries out the reaction alpha-D-glucosaminyl-[heparan sulfate](n) + 3'-phosphoadenylyl sulfate = N-sulfo-alpha-D-glucosaminyl-[heparan sulfate](n) + adenosine 3',5'-bisphosphate + 2 H(+). It functions in the pathway glycan metabolism; heparan sulfate biosynthesis. Its pathway is glycan metabolism; heparin biosynthesis. In terms of biological role, essential bifunctional enzyme that catalyzes both the N-deacetylation and the N-sulfation of glucosamine (GlcNAc) of the glycosaminoglycan in heparan sulfate. Modifies the GlcNAc-GlcA disaccharide repeating sugar backbone to make N-sulfated heparosan, a prerequisite substrate for later modifications in heparin biosynthesis. Plays a role in determining the extent and pattern of sulfation of heparan sulfate. The chain is Bifunctional heparan sulfate N-deacetylase/N-sulfotransferase 1 (ndst1) from Xenopus tropicalis (Western clawed frog).